The following is a 185-amino-acid chain: Ribosome-recycling factor (185 aa).

This sequence belongs to the RRF family.

It localises to the cytoplasm. In terms of biological role, responsible for the release of ribosomes from messenger RNA at the termination of protein biosynthesis. May increase the efficiency of translation by recycling ribosomes from one round of translation to another. This is Ribosome-recycling factor from Listeria monocytogenes serovar 1/2a (strain ATCC BAA-679 / EGD-e).